A 259-amino-acid chain; its full sequence is Probable ATP-dependent transporter ycf16 (259 aa).

The region spanning 9–253 is the ABC transporter domain; that stretch reads LEVKNLKAQV…EIKGYDWLNE (245 aa). 41–48 lines the ATP pocket; that stretch reads GPNGSGKS.

It belongs to the ABC transporter superfamily. Ycf16 family.

The protein localises to the plastid. The protein resides in the cyanelle. The sequence is that of Probable ATP-dependent transporter ycf16 (ycf16) from Cyanophora paradoxa.